Consider the following 385-residue polypeptide: Fe-S cluster assembly protein DRE2 (385 aa).

Residues Met-1 to Ile-177 are N-terminal SAM-like domain. A linker region spans residues Asn-178–Asn-240. A disordered region spans residues Tyr-200–Glu-226. The span at Ala-217–Glu-226 shows a compositional bias: acidic residues. [2Fe-2S] cluster is bound by residues Cys-261, Cys-275, Cys-278, and Cys-280. The segment at Cys-261–Cys-280 is fe-S binding site A. Residues Cys-348, Cys-351, Cys-359, and Cys-362 each contribute to the [4Fe-4S] cluster site. Short sequence motifs (cx2C motif) lie at residues Cys-348–Cys-351 and Cys-359–Cys-362. The fe-S binding site B stretch occupies residues Cys-348–Cys-362.

Belongs to the anamorsin family. In terms of assembly, monomer. Interacts with TAH18. Interacts with MIA40. [2Fe-2S] cluster serves as cofactor. Requires [4Fe-4S] cluster as cofactor.

It localises to the cytoplasm. The protein resides in the mitochondrion intermembrane space. Its function is as follows. Component of the cytosolic iron-sulfur (Fe-S) protein assembly (CIA) machinery required for the maturation of extramitochondrial Fe-S proteins. Part of an electron transfer chain functioning in an early step of cytosolic Fe-S biogenesis, facilitating the de novo assembly of a [4Fe-4S] cluster on the scaffold complex CFD1-NBP35. Electrons are transferred to DRE2 from NADPH via the FAD- and FMN-containing protein TAH18. TAH18-DRE2 are also required for the assembly of the diferric tyrosyl radical cofactor of ribonucleotide reductase (RNR), probably by providing electrons for reduction during radical cofactor maturation in the catalytic small subunit RNR2. The sequence is that of Fe-S cluster assembly protein DRE2 from Candida dubliniensis (strain CD36 / ATCC MYA-646 / CBS 7987 / NCPF 3949 / NRRL Y-17841) (Yeast).